A 159-amino-acid chain; its full sequence is Phosphodiesterase delta-like protein (159 aa).

The protein belongs to the PDE6D/unc-119 family.

The sequence is that of Phosphodiesterase delta-like protein (pdl-1) from Caenorhabditis elegans.